The chain runs to 438 residues: NADH-quinone oxidoreductase subunit D (438 aa).

Belongs to the complex I 49 kDa subunit family. In terms of assembly, NDH-1 is composed of 14 different subunits. Subunits NuoB, C, D, E, F, and G constitute the peripheral sector of the complex.

Its subcellular location is the cell membrane. The enzyme catalyses a quinone + NADH + 5 H(+)(in) = a quinol + NAD(+) + 4 H(+)(out). NDH-1 shuttles electrons from NADH, via FMN and iron-sulfur (Fe-S) centers, to quinones in the respiratory chain. The immediate electron acceptor for the enzyme in this species is believed to be a menaquinone. Couples the redox reaction to proton translocation (for every two electrons transferred, four hydrogen ions are translocated across the cytoplasmic membrane), and thus conserves the redox energy in a proton gradient. In Rhodococcus jostii (strain RHA1), this protein is NADH-quinone oxidoreductase subunit D.